The chain runs to 261 residues: Guanine nucleotide exchange factor BopE (261 aa).

Belongs to the GEF (guanine exchange factor) SopE family. In terms of assembly, monomer. Interacts with human CDC42.

It localises to the secreted. Its function is as follows. Activator for both CDC42 and RAC1 by directly interacting with these Rho GTPases and acting as a guanine nucleotide exchange factor (GEF). This activation results in actin cytoskeleton rearrangements and stimulates membrane ruffling, thus promoting bacterial entry into non-phagocytic cells. This chain is Guanine nucleotide exchange factor BopE (bopE), found in Burkholderia pseudomallei (strain 1710b).